The chain runs to 98 residues: Large ribosomal subunit protein uL23 (98 aa).

The protein belongs to the universal ribosomal protein uL23 family. Part of the 50S ribosomal subunit. Contacts protein L29, and trigger factor when it is bound to the ribosome.

Functionally, one of the early assembly proteins it binds 23S rRNA. One of the proteins that surrounds the polypeptide exit tunnel on the outside of the ribosome. Forms the main docking site for trigger factor binding to the ribosome. In Bifidobacterium longum (strain DJO10A), this protein is Large ribosomal subunit protein uL23.